The chain runs to 331 residues: Ribonuclease Z (331 aa).

His56, His58, Asp60, His61, His162, Asp235, and His297 together coordinate Zn(2+). Asp60 (proton acceptor) is an active-site residue.

This sequence belongs to the RNase Z family. In terms of assembly, homodimer. Requires Zn(2+) as cofactor.

The catalysed reaction is Endonucleolytic cleavage of RNA, removing extra 3' nucleotides from tRNA precursor, generating 3' termini of tRNAs. A 3'-hydroxy group is left at the tRNA terminus and a 5'-phosphoryl group is left at the trailer molecule.. Functionally, zinc phosphodiesterase, which displays some tRNA 3'-processing endonuclease activity. Probably involved in tRNA maturation, by removing a 3'-trailer from precursor tRNA. The chain is Ribonuclease Z (rnz) from Deinococcus radiodurans (strain ATCC 13939 / DSM 20539 / JCM 16871 / CCUG 27074 / LMG 4051 / NBRC 15346 / NCIMB 9279 / VKM B-1422 / R1).